A 151-amino-acid polypeptide reads, in one-letter code: Small ribosomal subunit protein uS15z (151 aa).

The protein belongs to the universal ribosomal protein uS15 family.

The polypeptide is Small ribosomal subunit protein uS15z (Oryza sativa subsp. japonica (Rice)).